The primary structure comprises 250 residues: 3-deoxy-manno-octulosonate cytidylyltransferase (250 aa).

This sequence belongs to the KdsB family.

The protein localises to the cytoplasm. The enzyme catalyses 3-deoxy-alpha-D-manno-oct-2-ulosonate + CTP = CMP-3-deoxy-beta-D-manno-octulosonate + diphosphate. It participates in nucleotide-sugar biosynthesis; CMP-3-deoxy-D-manno-octulosonate biosynthesis; CMP-3-deoxy-D-manno-octulosonate from 3-deoxy-D-manno-octulosonate and CTP: step 1/1. Its pathway is bacterial outer membrane biogenesis; lipopolysaccharide biosynthesis. Functionally, activates KDO (a required 8-carbon sugar) for incorporation into bacterial lipopolysaccharide in Gram-negative bacteria. This is 3-deoxy-manno-octulosonate cytidylyltransferase from Sinorhizobium medicae (strain WSM419) (Ensifer medicae).